We begin with the raw amino-acid sequence, 364 residues long: Programmed cell death protein 2-like (364 aa).

Ala-2 bears the N-acetylalanine mark. The interval 125–150 (EGSQDWGSDTEETPPPPASDLGSDSN) is disordered.

Over-expression suppresses AP1, CREB, NFAT, and NF-kB transcriptional activation, and delays cell cycle progression at S phase. This is Programmed cell death protein 2-like (Pdcd2l) from Mus musculus (Mouse).